Consider the following 847-residue polypeptide: Leucine--tRNA ligase (847 aa).

The short motif at 39–49 (PYPSGALHMGH) is the 'HIGH' region element. The 'KMSKS' region motif lies at 613–617 (KMSKS). Lysine 616 serves as a coordination point for ATP.

It belongs to the class-I aminoacyl-tRNA synthetase family.

The protein resides in the cytoplasm. It carries out the reaction tRNA(Leu) + L-leucine + ATP = L-leucyl-tRNA(Leu) + AMP + diphosphate. In Gloeobacter violaceus (strain ATCC 29082 / PCC 7421), this protein is Leucine--tRNA ligase.